An 883-amino-acid chain; its full sequence is DNA mismatch repair protein MutS (883 aa).

633–640 provides a ligand contact to ATP; the sequence is GPNMGGKS.

This sequence belongs to the DNA mismatch repair MutS family.

Its function is as follows. This protein is involved in the repair of mismatches in DNA. It is possible that it carries out the mismatch recognition step. This protein has a weak ATPase activity. This is DNA mismatch repair protein MutS from Bordetella pertussis (strain Tohama I / ATCC BAA-589 / NCTC 13251).